We begin with the raw amino-acid sequence, 222 residues long: Glutathione S-transferase A1 (222 aa).

Met-1 is subject to N-acetylmethionine. The residue at position 2 (Ala-2) is an N-acetylalanine; in Glutathione S-transferase A1, N-terminally processed. Residues 3–83 (EKPKLHYFNA…YIASKYNLYG (81 aa)) enclose the GST N-terminal domain. Lys-4 is subject to N6-succinyllysine. Glutathione contacts are provided by residues Tyr-9, Arg-45, 54–55 (QV), and 67–68 (QT). Residues 85–207 (DIKERALIDM…LQPGSPRKPP (123 aa)) enclose the GST C-terminal domain.

The protein belongs to the GST superfamily. Alpha family. As to quaternary structure, homodimer or heterodimer of GSTA1 and GSTA2. In terms of tissue distribution, liver.

It is found in the cytoplasm. The catalysed reaction is RX + glutathione = an S-substituted glutathione + a halide anion + H(+). The enzyme catalyses prostaglandin A2 + glutathione = prostaglandin A2-S-(R)-glutathione. It carries out the reaction prostaglandin J2 + glutathione = prostaglandin J2-S-(R)-glutathione. It catalyses the reaction (13S)-hydroperoxy-(9Z,11E)-octadecadienoate + 2 glutathione = (13S)-hydroxy-(9Z,11E)-octadecadienoate + glutathione disulfide + H2O. The catalysed reaction is androst-5-ene-3,17-dione = androst-4-ene-3,17-dione. Its activity is regulated as follows. The isomerase activity is inhibited by S-methylglutathione (GSMe). Its function is as follows. Glutathione S-transferase that catalyzes the nucleophilic attack of the sulfur atom of glutathione on the electrophilic groups of a wide range of exogenous and endogenous compounds. Involved in the formation of glutathione conjugates of both prostaglandin A2 (PGA2) and prostaglandin J2 (PGJ2). It also catalyzes the isomerization of D5-androstene-3,17-dione (AD) into D4-androstene-3,17-dione and may therefore play an important role in hormone biosynthesis. Through its glutathione-dependent peroxidase activity toward the fatty acid hydroperoxide (13S)-hydroperoxy-(9Z,11E)-octadecadienoate/13-HPODE it is also involved in the metabolism of oxidized linoleic acid. This is Glutathione S-transferase A1 (GSTA1) from Homo sapiens (Human).